The sequence spans 622 residues: Chaperone protein HscA homolog (622 aa).

The protein belongs to the heat shock protein 70 family.

In terms of biological role, chaperone involved in the maturation of iron-sulfur cluster-containing proteins. Has a low intrinsic ATPase activity which is markedly stimulated by HscB. This chain is Chaperone protein HscA homolog, found in Burkholderia cenocepacia (strain ATCC BAA-245 / DSM 16553 / LMG 16656 / NCTC 13227 / J2315 / CF5610) (Burkholderia cepacia (strain J2315)).